The following is a 337-amino-acid chain: D-alanine--D-alanine ligase (337 aa).

The ATP-grasp domain maps to 124–330; it reads KMWFSALGIP…FTEYLSLVIN (207 aa). Position 154 to 209 (154 to 209) interacts with ATP; that stretch reads ALAQWGSIFVKAASQGSSVGCYKVDDSAKVAGVLKDAFGYAPYVIVEKTIKARELE. The Mg(2+) site is built by aspartate 284, glutamate 297, and asparagine 299.

The protein belongs to the D-alanine--D-alanine ligase family. Mg(2+) serves as cofactor. It depends on Mn(2+) as a cofactor.

It is found in the cytoplasm. It carries out the reaction 2 D-alanine + ATP = D-alanyl-D-alanine + ADP + phosphate + H(+). Its pathway is cell wall biogenesis; peptidoglycan biosynthesis. Cell wall formation. The polypeptide is D-alanine--D-alanine ligase (Shewanella baltica (strain OS223)).